The primary structure comprises 77 residues: MSSSRFLILCIILISFFPLHECENGKSVESNKAMKPVCMPVNCNNKDKKLTCACCIGANPRNRCYNSRSQCTADCKL.

Residues Met-1–Cys-22 form the signal peptide. Disulfide bonds link Cys-38-Cys-54, Cys-43-Cys-75, Cys-52-Cys-71, and Cys-55-Cys-64.

The protein belongs to the MEG family. In terms of tissue distribution, expressed in flowers.

The polypeptide is EMBRYO SURROUNDING FACTOR 1-like protein 9 (ESFL9) (Arabidopsis thaliana (Mouse-ear cress)).